Reading from the N-terminus, the 504-residue chain is Histidine ammonia-lyase (504 aa).

A cross-link (5-imidazolinone (Ala-Gly)) is located at residues 142–144 (ASG). Position 143 is a 2,3-didehydroalanine (Ser) (Ser-143).

Belongs to the PAL/histidase family. Post-translationally, contains an active site 4-methylidene-imidazol-5-one (MIO), which is formed autocatalytically by cyclization and dehydration of residues Ala-Ser-Gly.

It is found in the cytoplasm. It carries out the reaction L-histidine = trans-urocanate + NH4(+). The protein operates within amino-acid degradation; L-histidine degradation into L-glutamate; N-formimidoyl-L-glutamate from L-histidine: step 1/3. The sequence is that of Histidine ammonia-lyase from Staphylococcus aureus (strain USA300).